A 309-amino-acid chain; its full sequence is tRNA dimethylallyltransferase (309 aa).

15–22 (GPTASGKS) contacts ATP. Residue 17–22 (TASGKS) participates in substrate binding. Positions 40–43 (DSRQ) are interaction with substrate tRNA.

Belongs to the IPP transferase family. Monomer. Mg(2+) is required as a cofactor.

It carries out the reaction adenosine(37) in tRNA + dimethylallyl diphosphate = N(6)-dimethylallyladenosine(37) in tRNA + diphosphate. In terms of biological role, catalyzes the transfer of a dimethylallyl group onto the adenine at position 37 in tRNAs that read codons beginning with uridine, leading to the formation of N6-(dimethylallyl)adenosine (i(6)A). This chain is tRNA dimethylallyltransferase, found in Chlorobium phaeovibrioides (strain DSM 265 / 1930) (Prosthecochloris vibrioformis (strain DSM 265)).